Here is a 612-residue protein sequence, read N- to C-terminus: Breast cancer type 1 susceptibility protein homolog (612 aa).

The RING-type zinc-finger motif lies at 21–61; that stretch reads CGICCSTYKDPILSTCFHIFCRSCINACFERKRKVQCPICR. The disordered stretch occupies residues 140-173; sequence RRKRPSRPQPPSAFAEEPAEPVEPPEPATKQPVE. BRCT domains lie at 415–477 and 505–603; these read RFAE…DYTI and EHGK…PYKA.

In terms of assembly, heterodimer (via RING-type zinc finger) with brd-1 to form the core CeBCD complex. Brc-1-brd-1 heterodimer-containing CeBCD complexes bound to chromatin are activated as an E3-ubiquitin ligase in response to DNA damage. The heterodimer interacts with the recombinase rad-51 following ionizing irradiation; the interaction is direct. The heterodimer interacts the E2-ubiquitin-conjugating enzyme let-70 following ionizing irradiation. The heterodimer interacts with the pro-crossover proteins msh-5 and syp-3. In terms of processing, phosphorylation of CeBCD complexes is required for E3 ubiquitin-protein ligase activity.

The protein localises to the nucleus. It localises to the chromosome. The protein resides in the cytoplasm. The catalysed reaction is S-ubiquitinyl-[E2 ubiquitin-conjugating enzyme]-L-cysteine + [acceptor protein]-L-lysine = [E2 ubiquitin-conjugating enzyme]-L-cysteine + N(6)-ubiquitinyl-[acceptor protein]-L-lysine.. Its pathway is protein modification; protein ubiquitination. Its activity is regulated as follows. E3 ubiquitin-protein ligase activity of CeBCD complexes occurs at DNA damage sites. Following DNA damage, E3 ubiquitin-protein ligase activity is reduced by caffeine treatment (inhibitor of ATM and ATK kinase activity). Its function is as follows. E3 ubiquitin-protein ligase that specifically mediates the formation of polyubiquitin chains and plays a central role in DNA repair. Plays a role in triggering cellular responses at damage sites in response to DNA damage that may be induced by UV and ionizing radiation for example. Functions in double-strand break repair, and is required for homologous recombination between sister chromatids in meiotic and mitotic cells. In particular, protects against chromosome non-disjunction and nuclear fragmentation during meiotic double-strand break repair to ensure sister chromatid recombination and aid chromosome stability. Required for normal cell cycle progression. Along with brap-2 modulates the expression of cell cycle arrest protein cki-1 in response to increased levels of reactive oxygen species. Constituent of the CeBCD complex that possesses E3 ubiquitin-protein ligase activity. When bound to chromatin, the brc-1-brd-1 heterodimer within the CeBCD complex is inactive during normal conditions, but in response to DNA damage, the brc-1-brd-1 heterodimer associates with other proteins such as the recombinase rad-51 or the E2-ubiquitin-conjugating enzyme let-70, which activate the CeBCD complex as an E3-ubiquitin ligase. Moreover, association between the brc-1-brd-1 heterodimer and rad-51 and let-70, probably requires DNA checkpoint proteins such as atl-1 and mre-11 in order to induce ubiquitination at DNA damage sites. To this end, the brc-1-brd-1 heterodimer coordinates a diverse range of cellular pathways such as DNA damage repair, ubiquitination and transcriptional regulation to maintain genomic stability. This Caenorhabditis elegans protein is Breast cancer type 1 susceptibility protein homolog.